The sequence spans 283 residues: Putative replication protein XF_b0001 (283 aa).

In Xylella fastidiosa (strain 9a5c), this protein is Putative replication protein XF_b0001.